The primary structure comprises 187 residues: UPF0301 protein WIGBR1650 (187 aa).

The protein belongs to the UPF0301 (AlgH) family.

The protein is UPF0301 protein WIGBR1650 of Wigglesworthia glossinidia brevipalpis.